A 120-amino-acid chain; its full sequence is NAD(P)H-quinone oxidoreductase subunit 3 (120 aa).

The next 3 membrane-spanning stretches (helical) occupy residues methionine 1–proline 21, methionine 64–valine 84, and leucine 89–valine 109.

This sequence belongs to the complex I subunit 3 family. In terms of assembly, NDH-1 can be composed of about 15 different subunits; different subcomplexes with different compositions have been identified which probably have different functions.

Its subcellular location is the cellular thylakoid membrane. The catalysed reaction is a plastoquinone + NADH + (n+1) H(+)(in) = a plastoquinol + NAD(+) + n H(+)(out). It catalyses the reaction a plastoquinone + NADPH + (n+1) H(+)(in) = a plastoquinol + NADP(+) + n H(+)(out). Functionally, NDH-1 shuttles electrons from an unknown electron donor, via FMN and iron-sulfur (Fe-S) centers, to quinones in the respiratory and/or the photosynthetic chain. The immediate electron acceptor for the enzyme in this species is believed to be plastoquinone. Couples the redox reaction to proton translocation, and thus conserves the redox energy in a proton gradient. Cyanobacterial NDH-1 also plays a role in inorganic carbon-concentration. The polypeptide is NAD(P)H-quinone oxidoreductase subunit 3 (Nostoc punctiforme (strain ATCC 29133 / PCC 73102)).